A 474-amino-acid polypeptide reads, in one-letter code: Methylenetetrahydrofolate--tRNA-(uracil-5-)-methyltransferase TrmFO (474 aa).

FAD is bound at residue glycine 9–glycine 14.

It belongs to the MnmG family. TrmFO subfamily. FAD serves as cofactor.

The protein localises to the cytoplasm. It carries out the reaction uridine(54) in tRNA + (6R)-5,10-methylene-5,6,7,8-tetrahydrofolate + NADH + H(+) = 5-methyluridine(54) in tRNA + (6S)-5,6,7,8-tetrahydrofolate + NAD(+). It catalyses the reaction uridine(54) in tRNA + (6R)-5,10-methylene-5,6,7,8-tetrahydrofolate + NADPH + H(+) = 5-methyluridine(54) in tRNA + (6S)-5,6,7,8-tetrahydrofolate + NADP(+). Its function is as follows. Catalyzes the folate-dependent formation of 5-methyl-uridine at position 54 (M-5-U54) in all tRNAs. In Methylorubrum extorquens (strain PA1) (Methylobacterium extorquens), this protein is Methylenetetrahydrofolate--tRNA-(uracil-5-)-methyltransferase TrmFO.